We begin with the raw amino-acid sequence, 416 residues long: UDP-N-acetylmuramoylalanine--D-glutamate ligase (416 aa).

ATP is bound at residue 104-110 (GSNGKST).

This sequence belongs to the MurCDEF family.

The protein resides in the cytoplasm. It carries out the reaction UDP-N-acetyl-alpha-D-muramoyl-L-alanine + D-glutamate + ATP = UDP-N-acetyl-alpha-D-muramoyl-L-alanyl-D-glutamate + ADP + phosphate + H(+). It participates in cell wall biogenesis; peptidoglycan biosynthesis. In terms of biological role, cell wall formation. Catalyzes the addition of glutamate to the nucleotide precursor UDP-N-acetylmuramoyl-L-alanine (UMA). This chain is UDP-N-acetylmuramoylalanine--D-glutamate ligase, found in Francisella tularensis subsp. tularensis (strain FSC 198).